The following is a 732-amino-acid chain: 1,4-alpha-glucan branching enzyme GlgB (732 aa).

The active-site Nucleophile is the Asp-408. Catalysis depends on Glu-461, which acts as the Proton donor.

It belongs to the glycosyl hydrolase 13 family. GlgB subfamily. Monomer.

The enzyme catalyses Transfers a segment of a (1-&gt;4)-alpha-D-glucan chain to a primary hydroxy group in a similar glucan chain.. It participates in glycan biosynthesis; glycogen biosynthesis. Its function is as follows. Catalyzes the formation of the alpha-1,6-glucosidic linkages in glycogen by scission of a 1,4-alpha-linked oligosaccharide from growing alpha-1,4-glucan chains and the subsequent attachment of the oligosaccharide to the alpha-1,6 position. The protein is 1,4-alpha-glucan branching enzyme GlgB of Rhodococcus jostii (strain RHA1).